Reading from the N-terminus, the 291-residue chain is Lipoyl synthase (291 aa).

Residues Cys-35, Cys-40, Cys-46, Cys-61, Cys-65, Cys-68, and Ser-273 each contribute to the [4Fe-4S] cluster site. Residues 47-262 enclose the Radical SAM core domain; the sequence is FGKRQATFLI…KERALTMGFE (216 aa).

Belongs to the radical SAM superfamily. Lipoyl synthase family. It depends on [4Fe-4S] cluster as a cofactor.

It is found in the cytoplasm. The enzyme catalyses [[Fe-S] cluster scaffold protein carrying a second [4Fe-4S](2+) cluster] + N(6)-octanoyl-L-lysyl-[protein] + 2 oxidized [2Fe-2S]-[ferredoxin] + 2 S-adenosyl-L-methionine + 4 H(+) = [[Fe-S] cluster scaffold protein] + N(6)-[(R)-dihydrolipoyl]-L-lysyl-[protein] + 4 Fe(3+) + 2 hydrogen sulfide + 2 5'-deoxyadenosine + 2 L-methionine + 2 reduced [2Fe-2S]-[ferredoxin]. The protein operates within protein modification; protein lipoylation via endogenous pathway; protein N(6)-(lipoyl)lysine from octanoyl-[acyl-carrier-protein]: step 2/2. Catalyzes the radical-mediated insertion of two sulfur atoms into the C-6 and C-8 positions of the octanoyl moiety bound to the lipoyl domains of lipoate-dependent enzymes, thereby converting the octanoylated domains into lipoylated derivatives. The protein is Lipoyl synthase of Citrifermentans bemidjiense (strain ATCC BAA-1014 / DSM 16622 / JCM 12645 / Bem) (Geobacter bemidjiensis).